The following is a 190-amino-acid chain: Holliday junction branch migration complex subunit RuvA (190 aa).

Residues 1-64 (MIGRITGTLI…EDAQLLYGFG (64 aa)) form a domain I region. The segment at 65–137 (SSAERSTFRE…MRGKLGADIG (73 aa)) is domain II. A flexible linker region spans residues 137–141 (GATPH). The tract at residues 142–190 (AASGHQSDILNALLALGYSDKESQAALKKLPDGVDVSEGIRLALKALVR) is domain III.

The protein belongs to the RuvA family. In terms of assembly, homotetramer. Forms an RuvA(8)-RuvB(12)-Holliday junction (HJ) complex. HJ DNA is sandwiched between 2 RuvA tetramers; dsDNA enters through RuvA and exits via RuvB. An RuvB hexamer assembles on each DNA strand where it exits the tetramer. Each RuvB hexamer is contacted by two RuvA subunits (via domain III) on 2 adjacent RuvB subunits; this complex drives branch migration. In the full resolvosome a probable DNA-RuvA(4)-RuvB(12)-RuvC(2) complex forms which resolves the HJ.

It is found in the cytoplasm. In terms of biological role, the RuvA-RuvB-RuvC complex processes Holliday junction (HJ) DNA during genetic recombination and DNA repair, while the RuvA-RuvB complex plays an important role in the rescue of blocked DNA replication forks via replication fork reversal (RFR). RuvA specifically binds to HJ cruciform DNA, conferring on it an open structure. The RuvB hexamer acts as an ATP-dependent pump, pulling dsDNA into and through the RuvAB complex. HJ branch migration allows RuvC to scan DNA until it finds its consensus sequence, where it cleaves and resolves the cruciform DNA. This is Holliday junction branch migration complex subunit RuvA from Bordetella pertussis (strain Tohama I / ATCC BAA-589 / NCTC 13251).